The primary structure comprises 443 residues: Tol-Pal system protein TolB (443 aa).

A signal peptide spans 1–33 (MKIGIINTKIRTVFSAFACMIAASLVCTMPARA).

This sequence belongs to the TolB family. As to quaternary structure, the Tol-Pal system is composed of five core proteins: the inner membrane proteins TolA, TolQ and TolR, the periplasmic protein TolB and the outer membrane protein Pal. They form a network linking the inner and outer membranes and the peptidoglycan layer.

The protein resides in the periplasm. Functionally, part of the Tol-Pal system, which plays a role in outer membrane invagination during cell division and is important for maintaining outer membrane integrity. The chain is Tol-Pal system protein TolB from Brucella suis biovar 1 (strain 1330).